The following is a 337-amino-acid chain: Protein RETICULATA-RELATED 3, chloroplastic (337 aa).

A chloroplast-targeting transit peptide spans 1–59; sequence MAAMAAKLQLSAKSDQSSVRLPRVINLSRDPTTRVSFPRNGSVCSLHTNFSSPHLAKPC. The segment covering 70-89 has biased composition (gly residues); it reads NNGGGSGSGGGGGGFGGSGG. Residues 70–96 form a disordered region; that stretch reads NNGGGSGSGGGGGGFGGSGGEASEESS. A run of 2 helical transmembrane segments spans residues 151–171 and 216–236; these read FVFS…YMLA and VFAS…NGLI.

Belongs to the RETICULATA family. As to expression, expressed in root meristem, root vasculature, distal region of young leaf primordia, leaf bundle sheath cells, hydathodes and pollen grains.

The protein resides in the plastid. Its subcellular location is the chloroplast membrane. Its function is as follows. May play a role in leaf development. Required for leaf mesophyll cell division in the early stages of leaf organogenesis. The protein is Protein RETICULATA-RELATED 3, chloroplastic of Arabidopsis thaliana (Mouse-ear cress).